The chain runs to 276 residues: Large ribosomal subunit protein uL2 (276 aa).

Disordered stretches follow at residues 37-59 and 225-276; these read QFQK…GGHK and VMNP…RHKR. Polar residues predominate over residues 39–49; it reads QKSGRNNNGHI. The segment covering 50–59 has biased composition (basic residues); it reads TTRHKGGGHK.

This sequence belongs to the universal ribosomal protein uL2 family. In terms of assembly, part of the 50S ribosomal subunit. Forms a bridge to the 30S subunit in the 70S ribosome.

Its function is as follows. One of the primary rRNA binding proteins. Required for association of the 30S and 50S subunits to form the 70S ribosome, for tRNA binding and peptide bond formation. It has been suggested to have peptidyltransferase activity; this is somewhat controversial. Makes several contacts with the 16S rRNA in the 70S ribosome. The polypeptide is Large ribosomal subunit protein uL2 (Cupriavidus pinatubonensis (strain JMP 134 / LMG 1197) (Cupriavidus necator (strain JMP 134))).